Here is a 365-residue protein sequence, read N- to C-terminus: DNA replication and repair protein RecF (365 aa).

Gly-30–Thr-37 contacts ATP.

This sequence belongs to the RecF family.

The protein localises to the cytoplasm. In terms of biological role, the RecF protein is involved in DNA metabolism; it is required for DNA replication and normal SOS inducibility. RecF binds preferentially to single-stranded, linear DNA. It also seems to bind ATP. This Desulfitobacterium hafniense (strain DSM 10664 / DCB-2) protein is DNA replication and repair protein RecF.